The following is a 500-amino-acid chain: Nuclear distribution protein PAC1 (500 aa).

7 WD repeats span residues 125–164 (HNGH…EPQQ), 169–219 (AHTR…NLKA), 225–265 (GHEN…IVLS), 268–310 (GHSN…LMIG), 338–378 (QNEL…IRSD), 397–436 (EHKS…ESNL), and 459–500 (IKDQ…EYIL).

Belongs to the WD repeat LIS1/nudF family. Self-associates. Interacts with NDL1 and dynein.

Its subcellular location is the cytoplasm. It localises to the cytoskeleton. The protein localises to the spindle pole. In terms of biological role, positively regulates the activity of the minus-end directed microtubule motor protein dynein. Plays a central role in positioning the mitotic spindle at the bud neck during cell division. Targets cytoplasmic dynein to microtubule plus ends, thereby promoting dynein-mediated microtubule sliding along the bud cortex and consequently the movement of the mitotic spindle to the bud neck. In Komagataella phaffii (strain GS115 / ATCC 20864) (Yeast), this protein is Nuclear distribution protein PAC1.